The primary structure comprises 778 residues: pH-response regulator protein palH/prr-4 (778 aa).

Topologically, residues 1–108 (MEPRQLFSDP…DPFYASTFPQ (108 aa)) are extracellular. Residues 109-129 (CYALAATTIIAYTLVIMLFIT) form a helical membrane-spanning segment. Residues 130 to 160 (PRSFLDGGVVVLGRKGFTNGGGGTSIGGRPW) are Periplasmic-facing. A helical membrane pass occupies residues 161–181 (LQKVAALSVAISLTIANAATF). The Extracellular segment spans residues 182–201 (RAAEQQYSWGVQNAKQLQED). A helical transmembrane segment spans residues 202-222 (VLGGAELKIIRIISDTFLWLA). The Periplasmic segment spans residues 223–237 (QAQTLIRLFPRQREK). Residues 238 to 258 (VIIKWTAFALITLDVIFQSLN) traverse the membrane as a helical segment. Over 259–275 (SFKYGGSDLTRPKFTEA) the chain is Extracellular. The helical transmembrane segment at 276-296 (VPALSYLFALALGVLYAAWVL) threads the bilayer. Residues 297-314 (YYSIMKKRYAFYHPLMKN) are Periplasmic-facing. Residues 315-335 (MILVAVLSVVSILVPVVFFIL) form a helical membrane-spanning segment. At 336–341 (DISKPD) the chain is on the extracellular side. A helical membrane pass occupies residues 342 to 362 (FAGWGDYVRWVGAAAASVIVW). The Periplasmic portion of the chain corresponds to 363–778 (EWVERIEALE…RSDSSTTPSP (416 aa)). Disordered regions lie at residues 394–499 (ASQS…DTTS), 514–605 (ELTS…DENS), and 660–778 (ELNH…TPSP). The span at 446–456 (HRTEPSSRNEP) shows a compositional bias: basic and acidic residues. A compositionally biased stretch (polar residues) spans 457–466 (NEGSSPVAET). 2 stretches are compositionally biased toward basic and acidic residues: residues 588–605 (FVTR…DENS) and 661–675 (LNHS…EESR). Over residues 720-732 (PIVTQGSFTNNRY) the composition is skewed to polar residues. Positions 749–759 (ARAPSQPQSPS) are enriched in low complexity. The span at 769-778 (RSDSSTTPSP) shows a compositional bias: polar residues.

This sequence belongs to the palH/RIM21 family.

It localises to the cell membrane. In terms of biological role, required for the proteolytic cleavage of the transcription factor pacc-1 in response to alkaline ambient pH. This is pH-response regulator protein palH/prr-4 (prr-4) from Neurospora crassa (strain ATCC 24698 / 74-OR23-1A / CBS 708.71 / DSM 1257 / FGSC 987).